Consider the following 300-residue polypeptide: Glutamyl-Q tRNA(Asp) synthetase (300 aa).

L-glutamate-binding positions include 8 to 12 and Asp44; that span reads RFAPT. Residues 11–21 carry the 'HIGH' region motif; it reads PTPSGDLHLGS. Residues Cys100, Cys102, Tyr122, and Cys126 each contribute to the Zn(2+) site. Residues Tyr181 and Arg199 each coordinate L-glutamate. The 'KMSKS' region motif lies at 237–241; that stretch reads KLSKQ. Residue Lys240 participates in ATP binding.

It belongs to the class-I aminoacyl-tRNA synthetase family. GluQ subfamily. Zn(2+) is required as a cofactor.

Functionally, catalyzes the tRNA-independent activation of glutamate in presence of ATP and the subsequent transfer of glutamate onto a tRNA(Asp). Glutamate is transferred on the 2-amino-5-(4,5-dihydroxy-2-cyclopenten-1-yl) moiety of the queuosine in the wobble position of the QUC anticodon. In Synechococcus sp. (strain ATCC 27144 / PCC 6301 / SAUG 1402/1) (Anacystis nidulans), this protein is Glutamyl-Q tRNA(Asp) synthetase.